The sequence spans 658 residues: UvrABC system protein B (658 aa).

One can recognise a Helicase ATP-binding domain in the interval 26-414 (AGLKKGLKHQ…PDVIEQIIRP (389 aa)). 39 to 46 (GATGTGKT) provides a ligand contact to ATP. Residues 92 to 115 (YYDYYQPEAYVPQSDTYIEKDASI) carry the Beta-hairpin motif. A Helicase C-terminal domain is found at 430 to 592 (QIDDLMDEIN…ITPKTIKKEI (163 aa)). Positions 622 to 658 (DVFIEGMEHEMKEAAKALDFERAAELRDALLEIKAEG) constitute a UVR domain.

This sequence belongs to the UvrB family. Forms a heterotetramer with UvrA during the search for lesions. Interacts with UvrC in an incision complex.

It is found in the cytoplasm. The UvrABC repair system catalyzes the recognition and processing of DNA lesions. A damage recognition complex composed of 2 UvrA and 2 UvrB subunits scans DNA for abnormalities. Upon binding of the UvrA(2)B(2) complex to a putative damaged site, the DNA wraps around one UvrB monomer. DNA wrap is dependent on ATP binding by UvrB and probably causes local melting of the DNA helix, facilitating insertion of UvrB beta-hairpin between the DNA strands. Then UvrB probes one DNA strand for the presence of a lesion. If a lesion is found the UvrA subunits dissociate and the UvrB-DNA preincision complex is formed. This complex is subsequently bound by UvrC and the second UvrB is released. If no lesion is found, the DNA wraps around the other UvrB subunit that will check the other stand for damage. The sequence is that of UvrABC system protein B from Listeria monocytogenes serovar 1/2a (strain ATCC BAA-679 / EGD-e).